The chain runs to 131 residues: Cytochrome b5 (131 aa).

The Cytochrome b5 heme-binding domain occupies 3–79 (AKIFSLDEVS…LEEYLIGSLD (77 aa)). Positions 38 and 62 each coordinate heme. The helical transmembrane segment at 108–125 (IILPALAIIGALVYKYVI) threads the bilayer.

It belongs to the cytochrome b5 family.

It is found in the endoplasmic reticulum membrane. Its subcellular location is the microsome membrane. In terms of biological role, membrane bound hemoprotein which function as an electron carrier for several membrane bound oxygenases. The protein is Cytochrome b5 of Rhizopus stolonifer (Rhizopus nigricans).